A 258-amino-acid polypeptide reads, in one-letter code: Phosphate import ATP-binding protein PstB (258 aa).

The ABC transporter domain occupies 5-247 (IETKDLDIYY…ERIFSNPKEK (243 aa)). Position 37–44 (37–44 (GPSGCGKS)) interacts with ATP.

It belongs to the ABC transporter superfamily. Phosphate importer (TC 3.A.1.7) family. As to quaternary structure, the complex is composed of two ATP-binding proteins (PstB), two transmembrane proteins (PstC and PstA) and a solute-binding protein (PstS).

Its subcellular location is the cell membrane. The enzyme catalyses phosphate(out) + ATP + H2O = ADP + 2 phosphate(in) + H(+). Functionally, part of the ABC transporter complex PstSACB involved in phosphate import. Responsible for energy coupling to the transport system. The sequence is that of Phosphate import ATP-binding protein PstB from Cutibacterium acnes (strain DSM 16379 / KPA171202) (Propionibacterium acnes).